The chain runs to 997 residues: Chromosomal passenger complex protein bir1 (997 aa).

BIR repeat units lie at residues 25-99 (RLDT…PWAY) and 120-194 (REQT…VFFT). Zn(2+) contacts are provided by Cys-163, Cys-166, His-183, and Cys-190. 5 disordered regions span residues 217–329 (EDLT…FSKG), 370–527 (TVSD…ENDE), 682–701 (TRDVSSPVSDEKSENVNHEE), 755–782 (SPKLQSKNNQTVEAVNTETSDKLQEKEA), and 817–838 (RTSVQNGTRSVSKNTPEKETKV). Residues 240–252 (TLNFSPSRKNNLN) are compositionally biased toward polar residues. Residues 288 to 299 (PRRKNKSPKKSK) show a composition bias toward basic residues. The span at 311 to 320 (SDEDEDDDDL) shows a compositional bias: acidic residues. The segment covering 370-392 (TVSDITGHQSVTDESDEQNNCMS) has biased composition (polar residues). Residues 408–423 (SVVSKSKEISSSVSSV) are compositionally biased toward low complexity. A compositionally biased stretch (basic and acidic residues) spans 426 to 451 (EQNHTEKQVAIETPEQQKVEKEDEHL). Polar residues-rich tracts occupy residues 463–476 (KQPISSKPSTSSPD) and 485–512 (RVSSSSFRDKILQTNFSPRSTIDSFSNI). Over residues 756–772 (PKLQSKNNQTVEAVNTE) the composition is skewed to polar residues. A compositionally biased stretch (basic and acidic residues) spans 773–782 (TSDKLQEKEA). Positions 817-830 (RTSVQNGTRSVSKN) are enriched in polar residues.

In terms of assembly, component of the CPC complex at least composed of ark1, bir1 and pic1. Interacts with the mitotic checkpoint complex (MCC) subunit mad3. In terms of processing, phosphorylated by ark1.

Its subcellular location is the nucleus. It localises to the cytoplasm. It is found in the cytoskeleton. The protein localises to the spindle. The protein resides in the chromosome. Its subcellular location is the centromere. Its function is as follows. Component of the chromosomal passenger complex (CPC), a complex that acts as a key regulator of chromosome segregation and cytokinesis. Has a role in chromosome segregation by recruiting condensin and ark1 kinase to appropriate sites as the cell progresses through mitosis. Ark1 activity depends upon bir1 function and phosphorylation. Ark1 with bir1 function is required for full-scale association with kinetochores and formation of a complex with mad3. The polypeptide is Chromosomal passenger complex protein bir1 (bir1) (Schizosaccharomyces pombe (strain 972 / ATCC 24843) (Fission yeast)).